We begin with the raw amino-acid sequence, 493 residues long: Mitochondrial distribution and morphology protein 10 (493 aa).

It belongs to the MDM10 family. Component of the ER-mitochondria encounter structure (ERMES) or MDM complex, composed of MMM1, MDM10, MDM12 and MDM34. Associates with the mitochondrial outer membrane sorting assembly machinery SAM(core) complex, which consists of SAM35, SAM37 and SAM50, to form a SAM(holo) complex.

It localises to the mitochondrion outer membrane. Component of the ERMES/MDM complex, which serves as a molecular tether to connect the endoplasmic reticulum and mitochondria. Components of this complex are involved in the control of mitochondrial shape and protein biogenesis and may function in phospholipid exchange. MDM10 is involved in the late assembly steps of the general translocase of the mitochondrial outer membrane (TOM complex). Functions in the TOM40-specific route of the assembly of outer membrane beta-barrel proteins, including the association of TOM40 with the receptor TOM22 and small TOM proteins. Can associate with the SAM(core) complex as well as the MDM12-MMM1 complex, both involved in late steps of the major beta-barrel assembly pathway, that is responsible for biogenesis of all outer membrane beta-barrel proteins. May act as a switch that shuttles between both complexes and channels precursor proteins into the TOM40-specific pathway. Plays a role in mitochondrial morphology and in the inheritance of mitochondria. The sequence is that of Mitochondrial distribution and morphology protein 10 from Saccharomyces cerevisiae (strain RM11-1a) (Baker's yeast).